Reading from the N-terminus, the 501-residue chain is L-arabinose isomerase (501 aa).

Positions 306, 333, 350, and 450 each coordinate Mn(2+).

Belongs to the arabinose isomerase family. In terms of assembly, homohexamer. Mn(2+) serves as cofactor.

The enzyme catalyses beta-L-arabinopyranose = L-ribulose. It participates in carbohydrate degradation; L-arabinose degradation via L-ribulose; D-xylulose 5-phosphate from L-arabinose (bacterial route): step 1/3. In terms of biological role, catalyzes the conversion of L-arabinose to L-ribulose. This is L-arabinose isomerase from Serratia proteamaculans (strain 568).